Reading from the N-terminus, the 272-residue chain is uncharacterized protein (272 aa).

Basic and acidic residues-rich tracts occupy residues Val-136–Ile-156 and Gly-231–Pro-240. 2 disordered regions span residues Val-136–His-157 and Val-174–Phe-272. Polar residues predominate over residues Asp-243–Pro-252. Residues Ser-253 to Phe-272 are compositionally biased toward low complexity.

This is an uncharacterized protein from Arabidopsis thaliana (Mouse-ear cress).